A 271-amino-acid chain; its full sequence is Methyltransferase psoC (271 aa).

It belongs to the methyltransferase superfamily. LaeA methyltransferase family.

The protein operates within secondary metabolite biosynthesis. Methyltransferase; part of the gene cluster that mediates the biosynthesis of pseurotin A, a competitive inhibitor of chitin synthase and an inducer of nerve-cell proliferation. The PKS-NRPS hybrid synthetase psoA is responsible for the biosynthesis of azaspirene, one of the first intermediates having the 1-oxa-7-azaspiro[4,4]-non-2-ene-4,6-dione core of pseurotin, via condensation of one acetyl-CoA, 4 malonyl-CoA, and a L-phenylalanine molecule. The dual-functional monooxygenase/methyltransferase psoF seems to be involved in the addition of the C3 methyl group onto the pseurotin scaffold. Azaspirene is then converted to synerazol through 4 steps including oxidation of C17 by the cytochrome P450 monooxygenase psoD, O-methylation of the hydroxy group of C8 by the methyltransferase psoC, and the trans-to-cis isomerization of the C13 olefin by the glutathione S-transferase psoE. The fourth step of synerazol production is performed by the dual-functional monooxygenase/methyltransferase psoF which seems to catalyze the epoxidation of the intermediate deepoxy-synerazol. Synerazol can be attacked by a water molecule nonenzymatically at two different positions to yield two diol products, pseurotin A and pseurotin D. This is Methyltransferase psoC from Aspergillus fumigatus (strain ATCC MYA-4609 / CBS 101355 / FGSC A1100 / Af293) (Neosartorya fumigata).